The following is a 517-amino-acid chain: Crotonobetaine/carnitine--CoA ligase (517 aa).

It belongs to the ATP-dependent AMP-binding enzyme family.

The enzyme catalyses 4-(trimethylamino)butanoate + ATP + CoA = 4-(trimethylamino)butanoyl-CoA + AMP + diphosphate. It carries out the reaction crotonobetaine + ATP + CoA = crotonobetainyl-CoA + AMP + diphosphate. It catalyses the reaction (R)-carnitine + ATP + CoA = (R)-carnitinyl-CoA + AMP + diphosphate. It participates in amine and polyamine metabolism; carnitine metabolism. Catalyzes the transfer of CoA to carnitine, generating the initial carnitinyl-CoA needed for the CaiB reaction cycle. Also has activity toward crotonobetaine and gamma-butyrobetaine. This is Crotonobetaine/carnitine--CoA ligase from Salmonella typhi.